The primary structure comprises 382 residues: POU domain, class 3, transcription factor 2-A (382 aa).

3 disordered regions span residues 69-136, 150-206, and 348-382; these read PWAT…SSNG, GMIN…TPTS, and EKRM…TSVQ. Residues 122 to 136 are compositionally biased toward polar residues; it reads STGSTHLSSMASSNG. The span at 165–178 shows a compositional bias: basic and acidic residues; it reads LRDSHDDHHGDHGH. A compositionally biased stretch (low complexity) spans 179–194; sequence QQVSQAQQQHSQLQGG. Residues 201–275 enclose the POU-specific domain; sequence EDTPTSDDLE…LLNKWLEEAD (75 aa). Positions 293 to 352 form a DNA-binding region, homeobox; that stretch reads KRKKRTSIEVSVKGALESHFLKCPKPSAPEITSLADSLQLEKEVVRVWFCNRRQKEKRMT.

Belongs to the POU transcription factor family. Class-3 subfamily. As to expression, expressed in the developing brain and spinal cord. Also found in a restricted region of the auditory vesicle during development. In the adult, expression is restricted to the brain.

Its subcellular location is the nucleus. In terms of biological role, transcription factor that may be implicated in patterning of the central nervous system during early development. The sequence is that of POU domain, class 3, transcription factor 2-A (pou3f2-a) from Xenopus laevis (African clawed frog).